The following is a 209-amino-acid chain: Uracil phosphoribosyltransferase (209 aa).

5-phospho-alpha-D-ribose 1-diphosphate is bound by residues R79, R104, and 131 to 139 (DPMLATGGS). Residues I194 and 199 to 201 (GDA) each bind uracil. D200 is a 5-phospho-alpha-D-ribose 1-diphosphate binding site.

It belongs to the UPRTase family. The cofactor is Mg(2+).

The enzyme catalyses UMP + diphosphate = 5-phospho-alpha-D-ribose 1-diphosphate + uracil. It participates in pyrimidine metabolism; UMP biosynthesis via salvage pathway; UMP from uracil: step 1/1. Allosterically activated by GTP. In terms of biological role, catalyzes the conversion of uracil and 5-phospho-alpha-D-ribose 1-diphosphate (PRPP) to UMP and diphosphate. In Geobacillus sp. (strain WCH70), this protein is Uracil phosphoribosyltransferase.